Consider the following 276-residue polypeptide: Large ribosomal subunit protein uL2 (276 aa).

Residues 222–276 (GVAMNPIDHPLGGGEGRSSGGRHPVSPWGMPTKGYKTRDRKKASSKLIIKRRGQK) form a disordered region. Over residues 259–276 (RDRKKASSKLIIKRRGQK) the composition is skewed to basic residues.

It belongs to the universal ribosomal protein uL2 family. Part of the 50S ribosomal subunit. Forms a bridge to the 30S subunit in the 70S ribosome.

Functionally, one of the primary rRNA binding proteins. Required for association of the 30S and 50S subunits to form the 70S ribosome, for tRNA binding and peptide bond formation. It has been suggested to have peptidyltransferase activity; this is somewhat controversial. Makes several contacts with the 16S rRNA in the 70S ribosome. The chain is Large ribosomal subunit protein uL2 from Nitratidesulfovibrio vulgaris (strain ATCC 29579 / DSM 644 / CCUG 34227 / NCIMB 8303 / VKM B-1760 / Hildenborough) (Desulfovibrio vulgaris).